The chain runs to 435 residues: ATP-dependent RNA helicase SUB2 (435 aa).

Residues 1 to 40 are disordered; it reads MSHEGQEELLDYSDSEEIAVPTTTAPSAAAGEGANDKEAD. Acidic residues predominate over residues 7-17; it reads EELLDYSDSEE. The span at 19–33 shows a compositional bias: low complexity; it reads AVPTTTAPSAAAGEG. Residues 51–79 carry the Q motif motif; that stretch reads TGFRDFLLKPELLRAIGDCGFEHPSEVQQ. A Helicase ATP-binding domain is found at 82–257; it reads IPQSILGTDV…KKFMQNPLEI (176 aa). 95 to 102 serves as a coordination point for ATP; that stretch reads AKSGLGKT. Residues 204–207 carry the DECD box motif; sequence DECD. In terms of domain architecture, Helicase C-terminal spans 269–430; that stretch reads GLQQYYIKLD…EFPEEGVDPS (162 aa).

This sequence belongs to the DEAD box helicase family. DECD subfamily.

Its subcellular location is the nucleus. It carries out the reaction ATP + H2O = ADP + phosphate + H(+). In terms of biological role, ATP-binding RNA helicase involved in transcription elongation and required for the export of mRNA out of the nucleus. SUB2 also plays a role in pre-mRNA splicing and spliceosome assembly. May be involved in rDNA and telomeric silencing, and maintenance of genome integrity. The protein is ATP-dependent RNA helicase SUB2 (SUB2) of Debaryomyces hansenii (strain ATCC 36239 / CBS 767 / BCRC 21394 / JCM 1990 / NBRC 0083 / IGC 2968) (Yeast).